Here is a 200-residue protein sequence, read N- to C-terminus: uncharacterized protein (200 aa).

This is an uncharacterized protein from Xylella fastidiosa (strain 9a5c).